We begin with the raw amino-acid sequence, 213 residues long: Probable GH family 25 lysozyme 4 (213 aa).

Positions 1–19 (MRLFLLLITFIALFGAINA) are cleaved as a signal peptide. The region spanning 21–213 (SGVDISQGSS…VGYDFNWYPN (193 aa)) is the Ch-type lysozyme domain. Residues Asp-24, Asp-112, and Glu-114 contribute to the active site.

This sequence belongs to the glycosyl hydrolase 25 family.

The protein resides in the secreted. It carries out the reaction Hydrolysis of (1-&gt;4)-beta-linkages between N-acetylmuramic acid and N-acetyl-D-glucosamine residues in a peptidoglycan and between N-acetyl-D-glucosamine residues in chitodextrins.. The polypeptide is Probable GH family 25 lysozyme 4 (Dictyostelium discoideum (Social amoeba)).